Here is a 470-residue protein sequence, read N- to C-terminus: ATP synthase subunit beta (470 aa).

Residue 155–162 (GGAGVGKT) coordinates ATP.

This sequence belongs to the ATPase alpha/beta chains family. F-type ATPases have 2 components, CF(1) - the catalytic core - and CF(0) - the membrane proton channel. CF(1) has five subunits: alpha(3), beta(3), gamma(1), delta(1), epsilon(1). CF(0) has three main subunits: a(1), b(2) and c(9-12). The alpha and beta chains form an alternating ring which encloses part of the gamma chain. CF(1) is attached to CF(0) by a central stalk formed by the gamma and epsilon chains, while a peripheral stalk is formed by the delta and b chains.

The protein resides in the cell membrane. The catalysed reaction is ATP + H2O + 4 H(+)(in) = ADP + phosphate + 5 H(+)(out). Its function is as follows. Produces ATP from ADP in the presence of a proton gradient across the membrane. The catalytic sites are hosted primarily by the beta subunits. The protein is ATP synthase subunit beta of Staphylococcus epidermidis (strain ATCC 35984 / DSM 28319 / BCRC 17069 / CCUG 31568 / BM 3577 / RP62A).